The primary structure comprises 452 residues: uncharacterized protein (452 aa).

Positions Met-1–Ala-20 are cleaved as a signal peptide. Residues Thr-130–Val-151 are disordered.

It is found in the endoplasmic reticulum. This is an uncharacterized protein from Schizosaccharomyces pombe (strain 972 / ATCC 24843) (Fission yeast).